The chain runs to 101 residues: Small ribosomal subunit protein uS10 (101 aa).

Belongs to the universal ribosomal protein uS10 family. Part of the 30S ribosomal subunit.

In terms of biological role, involved in the binding of tRNA to the ribosomes. This is Small ribosomal subunit protein uS10 from Saccharopolyspora erythraea (strain ATCC 11635 / DSM 40517 / JCM 4748 / NBRC 13426 / NCIMB 8594 / NRRL 2338).